Reading from the N-terminus, the 43-residue chain is MTVAQVFVVGILVALVLITAFAVYTAFGPPSKKLADPFEMHED.

A helical transmembrane segment spans residues 7–27 (FVVGILVALVLITAFAVYTAF).

The protein belongs to the PsbN family.

It is found in the cell inner membrane. Its function is as follows. May play a role in photosystem I and II biogenesis. This chain is Protein PsbN, found in Gloeobacter violaceus (strain ATCC 29082 / PCC 7421).